Here is a 629-residue protein sequence, read N- to C-terminus: MSSTYARFDTVFLLSRFAGAKYSPLWPSSSSSSHSSLLSSGIHLRAKPNSRLRSVTGASSSSSGPIIAGSESIEIKSLPTKPIEGQKTGTSGLRKKVKVFMQDNYLANWIQALFNSLPLEDYKDATLVLGGDGRYFNKEASQIIIKIAAGNGVGKILVGQEGILSTPAVSAVIRKRKANGGFIMSASHNPGGPEYDWGIKFNYSSGQPAPESITDKIYGNTLSISEIKVAEIPDIDLSHVGVTKYGNFSVEVIDPISDYLELMEDVFDFDLIRGLLSRSDFGFMFDAMHAVTGAYAKPIFVDNLEAKPDSISNGVPLEDFGHGHPDPNLTYAKDLVDVMYRDDGPDFGAASDGDGDRNMVLGNKFFVTPSDSVAIIAANAQEAIPYFRAGPKGLARSMPTSGALDRVAEKLKLPFFEVPTGWKFFGNLMDAGKLSICGEESFGTGSDHIREKDGIWAVLAWLSILAHRIKDKKPGEKLVSVADVVNEYWATYGRNFFSRYDYEECESEGANKMIEYLRDIVAKSKAGENYGNYVLQFADDFSYKDPVDGSVASKQGVRFVFTDGSRIIYRLSGNGSAGATVRIYIEQFEPDVSKHDVDAQIAIKPLIDLALSVSKLKEFTGREKPTVIT.

Residues 1–69 (MSSTYARFDT…SSSSGPIIAG (69 aa)) constitute a chloroplast transit peptide. Alpha-D-glucose 1,6-bisphosphate contacts are provided by arginine 94 and serine 187. The active-site Phosphoserine intermediate is serine 187. Positions 187, 352, 354, and 356 each coordinate Mg(2+). Serine 187 carries the post-translational modification Phosphoserine. Alpha-D-glucose 1,6-bisphosphate contacts are provided by aspartate 356, arginine 357, threonine 420, glutamate 439, serine 441, and lysine 452.

This sequence belongs to the phosphohexose mutase family. As to quaternary structure, monomer. Mg(2+) serves as cofactor.

Its subcellular location is the plastid. The protein resides in the chloroplast. The enzyme catalyses alpha-D-glucose 1-phosphate = alpha-D-glucose 6-phosphate. The catalysed reaction is O-phospho-L-seryl-[protein] + alpha-D-glucose 1-phosphate = alpha-D-glucose 1,6-bisphosphate + L-seryl-[protein]. It catalyses the reaction alpha-D-glucose 1,6-bisphosphate + L-seryl-[protein] = O-phospho-L-seryl-[protein] + alpha-D-glucose 6-phosphate. With respect to regulation, inhibited by the Calvin cycle intermediates fructose-1,6-bisphosphate and ribulose-1,5-bisphosphate. Catalyzes the reversible isomerization of alpha-D-glucose 1-phosphate to alpha-D-glucose 6-phosphate. The mechanism proceeds via the intermediate compound alpha-D-glucose 1,6-bisphosphate. This enzyme participates in both the breakdown and synthesis of glucose. The sequence is that of Phosphoglucomutase, chloroplastic (PGMP) from Brassica napus (Rape).